The following is a 61-amino-acid chain: uncharacterized protein (61 aa).

Positions 38–61 (TPRPFTPGLADPRRLGPRRVQAAQ) are disordered.

This is an uncharacterized protein from Homo sapiens (Human).